Reading from the N-terminus, the 247-residue chain is Uridylate kinase (247 aa).

Residue 17 to 20 coordinates ATP; it reads KFSG. Position 59 (Gly59) interacts with UMP. Positions 60 and 64 each coordinate ATP. UMP-binding positions include Asp79 and 140-147; that span reads TGNPFFTT. Positions 167, 173, and 176 each coordinate ATP.

The protein belongs to the UMP kinase family. In terms of assembly, homohexamer.

The protein resides in the cytoplasm. The catalysed reaction is UMP + ATP = UDP + ADP. It functions in the pathway pyrimidine metabolism; CTP biosynthesis via de novo pathway; UDP from UMP (UMPK route): step 1/1. Its activity is regulated as follows. Inhibited by UTP. Catalyzes the reversible phosphorylation of UMP to UDP. The protein is Uridylate kinase of Legionella pneumophila (strain Paris).